The sequence spans 316 residues: Pantothenate kinase (316 aa).

An ATP-binding site is contributed by 95 to 102; it reads GSVAVGKS.

This sequence belongs to the prokaryotic pantothenate kinase family.

It is found in the cytoplasm. The enzyme catalyses (R)-pantothenate + ATP = (R)-4'-phosphopantothenate + ADP + H(+). It functions in the pathway cofactor biosynthesis; coenzyme A biosynthesis; CoA from (R)-pantothenate: step 1/5. The chain is Pantothenate kinase from Cronobacter sakazakii (strain ATCC BAA-894) (Enterobacter sakazakii).